The sequence spans 308 residues: NAD-dependent protein deacylase SIR4 (308 aa).

Residues 1-16 (MAATKLHPALRNAIRA) constitute a mitochondrion transit peptide. Residues 28 to 308 (TFDVQEGIKL…EVLPAALRQL (281 aa)) form the Deacetylase sirtuin-type domain. NAD(+) contacts are provided by residues 53 to 73 (GAGISTDSGIPDYRSPGRPPH) and 129 to 132 (QNVD). H147 functions as the Proton acceptor in the catalytic mechanism. Residues C155, C158, C211, and C214 each coordinate Zn(2+). NAD(+) is bound by residues 251-253 (GTS), 277-279 (NSG), and I297.

The protein belongs to the sirtuin family. Class II subfamily. Requires Zn(2+) as cofactor.

Its subcellular location is the mitochondrion matrix. It carries out the reaction N(6)-acetyl-L-lysyl-[protein] + NAD(+) + H2O = 2''-O-acetyl-ADP-D-ribose + nicotinamide + L-lysyl-[protein]. Its function is as follows. NAD-dependent protein deacylase. Catalyzes the NAD-dependent hydrolysis of acyl groups from lysine residues. This chain is NAD-dependent protein deacylase SIR4, found in Monosiga brevicollis (Choanoflagellate).